The sequence spans 168 residues: SsrA-binding protein (168 aa).

Residues M1–I20 are disordered.

The protein belongs to the SmpB family.

The protein resides in the cytoplasm. Functionally, required for rescue of stalled ribosomes mediated by trans-translation. Binds to transfer-messenger RNA (tmRNA), required for stable association of tmRNA with ribosomes. tmRNA and SmpB together mimic tRNA shape, replacing the anticodon stem-loop with SmpB. tmRNA is encoded by the ssrA gene; the 2 termini fold to resemble tRNA(Ala) and it encodes a 'tag peptide', a short internal open reading frame. During trans-translation Ala-aminoacylated tmRNA acts like a tRNA, entering the A-site of stalled ribosomes, displacing the stalled mRNA. The ribosome then switches to translate the ORF on the tmRNA; the nascent peptide is terminated with the 'tag peptide' encoded by the tmRNA and targeted for degradation. The ribosome is freed to recommence translation, which seems to be the essential function of trans-translation. The protein is SsrA-binding protein of Mycobacterium ulcerans (strain Agy99).